The sequence spans 966 residues: Receptor protein-tyrosine kinase CEPR1 (966 aa).

An N-terminal signal peptide occupies residues 1 to 22 (MRLKNFPFFVLFFFFCFNSNQS). Over 23 to 592 (WGLMSSNQQP…QEPHGKKKLS (570 aa)) the chain is Extracellular. Asn-61 carries an N-linked (GlcNAc...) asparagine glycan. LRR repeat units lie at residues 70 to 94 (QGLVTDLDLSGLSLSGIFPDGVCSY), 95 to 120 (FPNLRVLRLSHNHLNKSSSFLNTIPN), 122 to 144 (SLLRDLNMSSVYLKGTLPDFSQM), 145 to 168 (KSLRVIDMSWNHFTGSFPLSIFNL), 170 to 194 (DLEYLNFNENPELDLWTLPDSVSKL), 195 to 218 (TKLTHMLLMTCMLHGNIPRSIGNL), 219 to 242 (TSLVDLELSGNFLSGEIPKEIGNL), 245 to 267 (LRQLELYYNYHLTGSIPEEIGNL), 268 to 291 (KNLTDIDISVSRLTGSIPDSICSL), 292 to 315 (PNLRVLQLYNNSLTGEIPKSLGNS), 317 to 339 (TLKILSLYDNYLTGELPPNLGSS), 341 to 363 (PMIALDVSENRLSGPLPAHVCKS), 365 to 386 (KLLYFLVLQNRFTGSIPETYGS), 387 to 411 (CKTLIRFRVASNRLVGTIPQGVMSL), 412 to 435 (PHVSIIDLAYNSLSGPIPNAIGNA), 437 to 459 (NLSELFMQSNRISGVIPHELSHS), 460 to 483 (TNLVKLDLSNNQLSGPIPSEVGRL), 484 to 507 (RKLNLLVLQGNHLDSSIPDSLSNL), 508 to 531 (KSLNVLDLSSNLLTGRIPENLSEL), and 533 to 554 (PTSINFSSNRLSGPIPVSLIRG). 4 N-linked (GlcNAc...) asparagine glycosylation sites follow: Asn-109, Asn-120, Asn-128, and Asn-167. Residues Asn-217 and Asn-241 are each glycosylated (N-linked (GlcNAc...) asparagine). Asn-269 and Asn-301 each carry an N-linked (GlcNAc...) asparagine glycan. The N-linked (GlcNAc...) asparagine glycan is linked to Asn-437. N-linked (GlcNAc...) asparagine glycosylation is found at Asn-527 and Asn-537. Residues 593-613 (SIWAILVSVFILVLGVIMFYL) form a helical membrane-spanning segment. Residues 614-966 (RQRMSKNRAV…VSDHLTQTRL (353 aa)) are Cytoplasmic-facing. In terms of domain architecture, Protein kinase spans 656-934 (LVDKNIVGHG…TMNEVVQLLI (279 aa)). ATP-binding positions include 662-670 (VGHGGSGTV) and Lys-684. 2 positions are modified to phosphotyrosine: Tyr-738 and Tyr-775. The active-site Proton acceptor is Asp-788. A phosphotyrosine mark is found at Tyr-831 and Tyr-838. Positions 937-966 (TPQGGPDMTSKPTTKIKDSIVSDHLTQTRL) are disordered.

Belongs to the protein kinase superfamily. Ser/Thr protein kinase family. In terms of assembly, interacts with the root-derived peptides CEP1, CEP3 and CEP5. In terms of tissue distribution, expressed in the vasculature, especially in phloem and procambium regions, of stems, leaves, cotyledons, sepals, pedals, pedicels, hypocotyls and roots (in primary and lateral roots, but not in root tips). Expressed in the root from the basal meristem onward. Present in the phloem pole pericycle and in the adjacent phloem.

It is found in the cell membrane. The catalysed reaction is L-tyrosyl-[protein] + ATP = O-phospho-L-tyrosyl-[protein] + ADP + H(+). Its function is as follows. Receptor kinase involved in the perception of C-terminally encoded plant signaling peptide (CEP) and subsequent regulation of root and shoot development. Required for xylem and phloem cell files morphology and organization, probably by preventing ectopic lignification in phloem cells. Together with CEPR2, mediates systemic nitrogen (N)-demand signaling upon the perception of root-derived peptides (e.g. CEP1) via the up-regulation of genes involved in N uptake and assimilation pathways. Positively regulates lateral root initiation and development; probably repressed by the signaling peptide CEP5. This is Receptor protein-tyrosine kinase CEPR1 from Arabidopsis thaliana (Mouse-ear cress).